The sequence spans 1352 residues: DNA-directed RNA polymerase subunit beta (1352 aa).

It belongs to the RNA polymerase beta chain family. In terms of assembly, the RNAP catalytic core consists of 2 alpha, 1 beta, 1 beta' and 1 omega subunit. When a sigma factor is associated with the core the holoenzyme is formed, which can initiate transcription.

It carries out the reaction RNA(n) + a ribonucleoside 5'-triphosphate = RNA(n+1) + diphosphate. Its function is as follows. DNA-dependent RNA polymerase catalyzes the transcription of DNA into RNA using the four ribonucleoside triphosphates as substrates. This chain is DNA-directed RNA polymerase subunit beta, found in Hydrogenovibrio crunogenus (strain DSM 25203 / XCL-2) (Thiomicrospira crunogena).